The following is a 96-amino-acid chain: uncharacterized protein (96 aa).

The disordered stretch occupies residues 35-96 (SPSGEKRSTK…KKFSSPPHPK (62 aa)). Positions 38–52 (GEKRSTKNQTKENTK) are enriched in basic and acidic residues. Positions 69–80 (ANQQTNENSKPL) are enriched in polar residues.

This is an uncharacterized protein from Dictyostelium discoideum (Social amoeba).